Reading from the N-terminus, the 256-residue chain is Thiazole synthase (256 aa).

Lys96 (schiff-base intermediate with DXP) is an active-site residue. 1-deoxy-D-xylulose 5-phosphate is bound by residues Gly157, 183–184 (AG), and 205–206 (NT).

The protein belongs to the ThiG family. As to quaternary structure, homotetramer. Forms heterodimers with either ThiH or ThiS.

It is found in the cytoplasm. It catalyses the reaction [ThiS sulfur-carrier protein]-C-terminal-Gly-aminoethanethioate + 2-iminoacetate + 1-deoxy-D-xylulose 5-phosphate = [ThiS sulfur-carrier protein]-C-terminal Gly-Gly + 2-[(2R,5Z)-2-carboxy-4-methylthiazol-5(2H)-ylidene]ethyl phosphate + 2 H2O + H(+). The protein operates within cofactor biosynthesis; thiamine diphosphate biosynthesis. Its function is as follows. Catalyzes the rearrangement of 1-deoxy-D-xylulose 5-phosphate (DXP) to produce the thiazole phosphate moiety of thiamine. Sulfur is provided by the thiocarboxylate moiety of the carrier protein ThiS. In vitro, sulfur can be provided by H(2)S. In Bacillus mycoides (strain KBAB4) (Bacillus weihenstephanensis), this protein is Thiazole synthase.